Reading from the N-terminus, the 77-residue chain is U9-lycotoxin-Ls1a (77 aa).

A signal peptide spans 1 to 20 (MKLLLFTALVLVVIVSLIEA). A propeptide spanning residues 21 to 26 (EAENER) is cleaved from the precursor.

It belongs to the neurotoxin 19 (CSTX) family. 08 (U8-Lctx) subfamily. Post-translationally, contains 4 disulfide bonds. Expressed by the venom gland.

It localises to the secreted. The sequence is that of U9-lycotoxin-Ls1a from Lycosa singoriensis (Wolf spider).